Reading from the N-terminus, the 310-residue chain is Mas-related G-protein coupled receptor member E (310 aa).

Topologically, residues 1–22 (MTSLSVHTDSPSTQGEMAFNLT) are extracellular. N-linked (GlcNAc...) asparagine glycosylation is present at Asn20. A helical membrane pass occupies residues 23–43 (ILSLTELLSLGGLLGNGVALW). Topologically, residues 44 to 60 (LLNQNVYRNPFSIYLLD) are cytoplasmic. A helical membrane pass occupies residues 61 to 81 (VACADLIFLCCHMVAIIPELL). The Extracellular portion of the chain corresponds to 82-92 (QDQLNFPEFVH). A helical membrane pass occupies residues 93 to 113 (ISLTMLRFFCYIVGLSLLAAI). Topologically, residues 114 to 133 (STEQCLATLFPAWYLCRRPR) are cytoplasmic. Residues 134 to 154 (YLTTCVCALIWVLCLLLDLLL) traverse the membrane as a helical segment. Over 155 to 174 (SGACTQFFGAPSYHLCDMLW) the chain is Extracellular. A helical transmembrane segment spans residues 175–195 (LVVAVLLAALCCTMCVTSLLL). The Cytoplasmic portion of the chain corresponds to 196–213 (LLRVERGPERHQPRGFPT). Residues 214–234 (LVLLAVLLFLFCGLPFGIFWL) form a helical membrane-spanning segment. The Extracellular segment spans residues 235 to 248 (SKNLSWHIPLYFYH). N-linked (GlcNAc...) asparagine glycosylation occurs at Asn237. The chain crosses the membrane as a helical span at residues 249–269 (FSFFMASVHSAAKPAIYFFLG). The Cytoplasmic segment spans residues 270–310 (STPGQRFREPLRLVLQRALGDEAELGAGREASQGGLVDMTV).

The protein belongs to the G-protein coupled receptor 1 family. Mas subfamily.

The protein localises to the cell membrane. Orphan receptor. May regulate nociceptor function and/or development, including the sensation or modulation of pain. This chain is Mas-related G-protein coupled receptor member E (Mrgpre), found in Mus musculus (Mouse).